Here is a 419-residue protein sequence, read N- to C-terminus: ATP phosphoribosyltransferase regulatory subunit (419 aa).

It belongs to the class-II aminoacyl-tRNA synthetase family. HisZ subfamily. Heteromultimer composed of HisG and HisZ subunits.

The protein resides in the cytoplasm. It participates in amino-acid biosynthesis; L-histidine biosynthesis; L-histidine from 5-phospho-alpha-D-ribose 1-diphosphate: step 1/9. Required for the first step of histidine biosynthesis. May allow the feedback regulation of ATP phosphoribosyltransferase activity by histidine. In Ruminiclostridium cellulolyticum (strain ATCC 35319 / DSM 5812 / JCM 6584 / H10) (Clostridium cellulolyticum), this protein is ATP phosphoribosyltransferase regulatory subunit.